The sequence spans 316 residues: Ribosomal RNA small subunit methyltransferase H (316 aa).

Residues 35-37 (AGH), D55, F84, D105, and Q112 each bind S-adenosyl-L-methionine.

It belongs to the methyltransferase superfamily. RsmH family.

It is found in the cytoplasm. The enzyme catalyses cytidine(1402) in 16S rRNA + S-adenosyl-L-methionine = N(4)-methylcytidine(1402) in 16S rRNA + S-adenosyl-L-homocysteine + H(+). In terms of biological role, specifically methylates the N4 position of cytidine in position 1402 (C1402) of 16S rRNA. The protein is Ribosomal RNA small subunit methyltransferase H of Streptococcus pneumoniae (strain ATCC 700669 / Spain 23F-1).